The primary structure comprises 288 residues: Release factor glutamine methyltransferase (288 aa).

S-adenosyl-L-methionine-binding positions include 123 to 127 (GTGSG), aspartate 146, and asparagine 190. 190–193 (NPPY) is a binding site for substrate.

The protein belongs to the protein N5-glutamine methyltransferase family. PrmC subfamily.

It carries out the reaction L-glutaminyl-[peptide chain release factor] + S-adenosyl-L-methionine = N(5)-methyl-L-glutaminyl-[peptide chain release factor] + S-adenosyl-L-homocysteine + H(+). Methylates the class 1 translation termination release factors RF1/PrfA and RF2/PrfB on the glutamine residue of the universally conserved GGQ motif. The chain is Release factor glutamine methyltransferase from Bacillus subtilis (strain 168).